The chain runs to 123 residues: Ribosome-binding factor A (123 aa).

It belongs to the RbfA family. As to quaternary structure, monomer. Binds 30S ribosomal subunits, but not 50S ribosomal subunits or 70S ribosomes.

The protein localises to the cytoplasm. Functionally, one of several proteins that assist in the late maturation steps of the functional core of the 30S ribosomal subunit. Associates with free 30S ribosomal subunits (but not with 30S subunits that are part of 70S ribosomes or polysomes). Required for efficient processing of 16S rRNA. May interact with the 5'-terminal helix region of 16S rRNA. The protein is Ribosome-binding factor A of Neisseria gonorrhoeae (strain NCCP11945).